The following is a 163-amino-acid chain: Sperm surface protein Sp17 (163 aa).

2 disordered regions span residues 57–115 (PAEW…EKEE) and 129–163 (VAREEVKKMKTDSLQNEEKEENSEDTGFTSRTHEK). Basic and acidic residues-rich tracts occupy residues 62–98 (SKVEDRFYNNHAFEEQEPPEKSDPKQEESQVSGKEEE) and 129–139 (VAREEVKKMKT). The 30-residue stretch at 114-143 (EEVAAVKIQAAFRGHVAREEVKKMKTDSLQ) folds into the IQ domain. The segment covering 153 to 163 (DTGFTSRTHEK) has biased composition (polar residues).

As to quaternary structure, homodimer. May interact with ROPN1. Testis- and sperm-specific.

It is found in the membrane. In terms of biological role, sperm surface zona pellucida binding protein. Helps to bind spermatozoa to the zona pellucida with high affinity. Might function in binding zona pellucida and carbohydrates. The sequence is that of Sperm surface protein Sp17 (SPA17) from Papio hamadryas (Hamadryas baboon).